Consider the following 745-residue polypeptide: Interleukin-17 receptor D (745 aa).

The N-terminal stretch at Met-1–Gly-26 is a signal peptide. The Extracellular segment spans residues Gly-27–Arg-298. Asn-61, Asn-79, Asn-136, Asn-170, Asn-205, and Asn-276 each carry an N-linked (GlcNAc...) asparagine glycan. Residues Ala-299–Met-319 traverse the membrane as a helical segment. Topologically, residues Cys-320–Thr-745 are cytoplasmic. Positions Arg-354–Ala-518 constitute an SEFIR domain. Disordered stretches follow at residues Arg-432–Ser-454 and Arg-631–Val-713. Residues Thr-439 to Ser-448 show a composition bias toward basic and acidic residues. A compositionally biased stretch (low complexity) spans Ser-693–Leu-705.

As to quaternary structure, interacts with fgfr1 and fgfr2.

The protein resides in the membrane. Feedback inhibitor of fibroblast growth factor mediated Ras-MAPK signaling and ERK activation. May inhibit FGF-induced FGFR1 tyrosine phosphorylation. The sequence is that of Interleukin-17 receptor D (il17rd) from Danio rerio (Zebrafish).